A 611-amino-acid chain; its full sequence is Immediate-early protein 3 (611 aa).

2 disordered regions span residues 119-155 (TASH…QRLD) and 180-383 (EEEY…SGSD). Residues 138-151 (HSEKKAKKHKNKQR) show a composition bias toward basic residues. The short motif at 141–147 (KKAKKHK) is the Nuclear localization signal element. A compositionally biased stretch (basic and acidic residues) spans 198–213 (HFDERSPSRSSSDHGG). Over residues 230 to 240 (SEDEDDEDDER) the composition is skewed to acidic residues. Residues 260–277 (HGGSHSSRSSIKSSGSGS) are compositionally biased toward low complexity. The short motif at 279 to 285 (RHHHKRK) is the Nuclear localization signal element. Low complexity predominate over residues 341 to 376 (PPSSGSNSNKHSSSSGGSTSSSHKKQQQQQAPSKKP).

It is found in the host nucleus. In terms of biological role, strong transcriptional activator of the E1 promoter, shows an autoregulatory function by repression of the IE1/IE3 promoter. The IE1 protein has some additive effect on the trans-activating properties of the IE3 protein. This chain is Immediate-early protein 3 (IE1), found in Mus musculus (Mouse).